A 781-amino-acid chain; its full sequence is ATP-dependent RNA helicase rok1 (781 aa).

2 disordered regions span residues 7 to 108 (LSRG…KPKL) and 134 to 177 (QDEA…IYPQ). Residues 48-57 (KRGKKRKRKG) show a composition bias toward basic residues. A compositionally biased stretch (acidic residues) spans 66–75 (SGDEDDDASD). 2 stretches are compositionally biased toward basic and acidic residues: residues 84–108 (TPEE…KPKL) and 139–173 (TEEK…DKKQ). The Q motif signature appears at 184–212 (ELKYTYGIHPVLADNITRQGFRVPTEVQM). The 255-residue stretch at 233–487 (DVKVEKGIDF…TKHIDKRAKR (255 aa)) folds into the Helicase ATP-binding domain. Residue 246–253 (APTGSGKT) participates in ATP binding. The tract at residues 323 to 386 (ESNEQEETEQ…SRAKGDQKFK (64 aa)) is disordered. The span at 339-369 (QDSDSDSEAESEPEEVMKIDEEEEEEEESDS) shows a compositional bias: acidic residues. Basic and acidic residues predominate over residues 370–386 (DAEKKTESRAKGDQKFK). The short motif at 434–437 (DEAD) is the DEAD box element. One can recognise a Helicase C-terminal domain in the interval 527 to 689 (ALRQLLHPVS…GKDIDEKDTV (163 aa)). Residues 718-781 (RGVESRRTGG…KAEEEWTGLD (64 aa)) form a disordered region. A compositionally biased stretch (basic and acidic residues) spans 736-752 (SWERRRENNRREAIEAS).

Belongs to the DEAD box helicase family. DDX52/ROK1 subfamily. Interacts with the U3 snoRNA and is associated with the 90S and 40S pre-ribosomes.

It localises to the nucleus. The protein resides in the nucleolus. It catalyses the reaction ATP + H2O = ADP + phosphate + H(+). Functionally, ATP-dependent RNA helicase involved in 40S ribosomal subunit biogenesis. Required for the processing and cleavage of 35S pre-rRNA at sites A0, A1, and A2, leading to mature 18S rRNA. This is ATP-dependent RNA helicase rok1 (drh-16) from Neurospora crassa (strain ATCC 24698 / 74-OR23-1A / CBS 708.71 / DSM 1257 / FGSC 987).